The primary structure comprises 59 residues: Large ribosomal subunit protein bL32 (59 aa).

A compositionally biased stretch (basic residues) spans 1 to 20 (MAVPKKKTSKGKRNQRHATW). Residues 1–22 (MAVPKKKTSKGKRNQRHATWKG) form a disordered region.

Belongs to the bacterial ribosomal protein bL32 family.

In Prochlorococcus marinus (strain NATL1A), this protein is Large ribosomal subunit protein bL32.